The chain runs to 412 residues: Cinnamoyl-CoA:phenyllactate CoA-transferase (412 aa).

Asn-102 serves as a coordination point for CoA. Catalysis depends on Asp-176, which acts as the Nucleophile.

Homodimer. Part of the heterotrimeric phenyllactate dehydratase complex FldABC, composed of (R)-phenyllactate CoA-transferase (FldA) and a heterodimeric (R)-phenyllactyl-CoA dehydratase (FldB and FldC).

It catalyses the reaction (E)-cinnamoyl-CoA + (R)-3-phenyllactate = (R)-3-phenyllactoyl-CoA + (E)-cinnamate. Its pathway is amino-acid degradation; L-phenylalanine degradation. Its function is as follows. Component of the phenyllactate dehydratase complex FldABC that is involved in the fermentation of L-phenylalanine via a Stickland reaction. This complex catalyzes the reversible syn-dehydration of (R)-phenyllactate to (E)-cinnamate in two steps, a CoA-transfer from cinnamoyl-CoA to phenyllactate, catalyzed by FldA, followed by the dehydration of phenyllactyl-CoA to cinnamoyl-CoA, catalyzed by FldB and FldC. In vitro, FldA can use 3-phenylpropanoate as a better CoA-acceptor than phenyllactate. This chain is Cinnamoyl-CoA:phenyllactate CoA-transferase, found in Clostridium sporogenes.